The chain runs to 76 residues: Sulfur carrier protein TusA (76 aa).

Catalysis depends on C14, which acts as the Cysteine persulfide intermediate.

It belongs to the sulfur carrier protein TusA family. Interacts with IscS.

Its subcellular location is the cytoplasm. The protein operates within tRNA modification. Its function is as follows. Sulfur carrier protein involved in sulfur trafficking in the cell. Part of a sulfur-relay system required for 2-thiolation during synthesis of 2-thiouridine of the modified wobble base 5-methylaminomethyl-2-thiouridine (mnm(5)s(2)U) in tRNA. Interacts with IscS and stimulates its cysteine desulfurase activity. Accepts an activated sulfur from IscS, which is then transferred to TusD, and thus determines the direction of sulfur flow from IscS to 2-thiouridine formation. Also appears to be involved in sulfur transfer for the biosynthesis of molybdopterin. This is Sulfur carrier protein TusA from Buchnera aphidicola subsp. Acyrthosiphon pisum (strain Tuc7).